Reading from the N-terminus, the 90-residue chain is Small ribosomal subunit protein bS16 (90 aa).

The protein belongs to the bacterial ribosomal protein bS16 family.

In Bacillus velezensis (strain DSM 23117 / BGSC 10A6 / LMG 26770 / FZB42) (Bacillus amyloliquefaciens subsp. plantarum), this protein is Small ribosomal subunit protein bS16.